Here is a 447-residue protein sequence, read N- to C-terminus: Sulfoquinovose isomerase (447 aa).

Belongs to the SqvD family.

It catalyses the reaction 6-sulfo-beta-D-quinovose = 6-deoxy-6-sulfo-D-fructose. Its function is as follows. Part of the sulfo-TK pathway, a D-sulfoquinovose degradation pathway that produces 2-hydroxyethane-1-sulfonate (isethionate). Catalyzes the isomerization of sulfoquinovose (SQ) to 6-deoxy-6-sulfo-D-fructose (SF). In Clostridium sp. (strain MSTE9), this protein is Sulfoquinovose isomerase.